A 175-amino-acid chain; its full sequence is Phosphopantetheine adenylyltransferase (175 aa).

Ser-10 serves as a coordination point for substrate. ATP is bound by residues 10–11 (SF) and His-18. Positions 42, 74, and 88 each coordinate substrate. ATP is bound by residues 89-91 (GMR), Glu-99, and 124-130 (WIFTSSS).

This sequence belongs to the bacterial CoaD family. As to quaternary structure, homohexamer. Mg(2+) serves as cofactor.

The protein resides in the cytoplasm. The enzyme catalyses (R)-4'-phosphopantetheine + ATP + H(+) = 3'-dephospho-CoA + diphosphate. The protein operates within cofactor biosynthesis; coenzyme A biosynthesis; CoA from (R)-pantothenate: step 4/5. Functionally, reversibly transfers an adenylyl group from ATP to 4'-phosphopantetheine, yielding dephospho-CoA (dPCoA) and pyrophosphate. In Desulfatibacillum aliphaticivorans, this protein is Phosphopantetheine adenylyltransferase.